The primary structure comprises 401 residues: Phosphoglycerate kinase (401 aa).

Substrate-binding positions include 21-23 (DLN), arginine 36, 59-62 (HQGR), arginine 116, and arginine 156. Residues glutamate 331 and 357–360 (GGDT) each bind ATP.

The protein belongs to the phosphoglycerate kinase family.

The protein localises to the cytoplasm. It catalyses the reaction (2R)-3-phosphoglycerate + ATP = (2R)-3-phospho-glyceroyl phosphate + ADP. It participates in carbohydrate degradation; glycolysis; pyruvate from D-glyceraldehyde 3-phosphate: step 2/5. This Haloarcula vallismortis (Halobacterium vallismortis) protein is Phosphoglycerate kinase (pgk).